A 481-amino-acid chain; its full sequence is Tryptophan--tRNA ligase, cytoplasmic (481 aa).

In terms of domain architecture, WHEP-TRS spans 12–68 (SPLELFNSIAAQGELVRSLKAGNAPKDEIESAVKMLLSLKMNYKTAMGEEYKAGCPP). Residues 65-85 (GCPPGNSTAGSNGDPDATKAS) form a disordered region. Lys-158 is subject to N6-succinyllysine. The 'HIGH' region motif lies at 168–177 (PSSEAMHLGH). The 'KMSKS' region motif lies at 353-357 (KMSAS). Position 355 is a phosphoserine (Ser-355).

This sequence belongs to the class-I aminoacyl-tRNA synthetase family. Homodimer. Interacts with oxidized form of GAPDH. Post-translationally, proteolytic cleavage generates 2 forms; T1-TrpRS and T2-TrpRS.

It localises to the cytoplasm. It catalyses the reaction tRNA(Trp) + L-tryptophan + ATP = L-tryptophyl-tRNA(Trp) + AMP + diphosphate + H(+). In terms of biological role, catalyzes the attachment of tryptophan to tRNA(Trp) in a two-step reaction: tryptophan is first activated by ATP to form Trp-AMP and then transferred to the acceptor end of the tRNA(Trp). Could also possess an angiostatic activity. This is Tryptophan--tRNA ligase, cytoplasmic from Rattus norvegicus (Rat).